We begin with the raw amino-acid sequence, 134 residues long: Larval cuticle protein A3A (134 aa).

Copy 1 of the repeat occupies Ala23–Val26. The interval Asp38–Gly80 is disordered. Positions His40–Ala106 constitute a Chitin-binding type R&amp;R domain. The stretch at Ala111–Ala114 is repeat 2.

Functionally, component of the cuticle of the larva of Tenebrio molitor. The polypeptide is Larval cuticle protein A3A (Tenebrio molitor (Yellow mealworm beetle)).